Here is a 342-residue protein sequence, read N- to C-terminus: MLVLALESSCDETAAAVVKDGRTVLSSIVASQISVHAEYGGVVPEIASRKHLESVSFVVEQALAEAGVGLDRIDGIAVTQGPGLAGALLVGISVAKGLAFGRSLPLVGVNHIEGHLLAVFLEAPVQFPFIALAVSGGHSHLYRVDGIGRYQTLGQTVDDAAGEAFDKVAKLIGLPYPGGVAIDRLAVSGDPKAIKFPRPLLHDGTFNFSFSGLKTAVLTHVGKHPEAKEAGINDLAASFQAAVCEVLTKKTAAAVAATGIKRLVVAGGVACNSALRRSMAEYAAANGVELSIPSPALCADNAAMIAVPGDYYLGLGVTSGFDLDALPVWPLDKLALRLKEHC.

Positions 111 and 115 each coordinate Fe cation. Substrate contacts are provided by residues 133–137 (AVSGG), D166, G179, D183, and N272. A Fe cation-binding site is contributed by D300.

Belongs to the KAE1 / TsaD family. Requires Fe(2+) as cofactor.

Its subcellular location is the cytoplasm. The catalysed reaction is L-threonylcarbamoyladenylate + adenosine(37) in tRNA = N(6)-L-threonylcarbamoyladenosine(37) in tRNA + AMP + H(+). Its function is as follows. Required for the formation of a threonylcarbamoyl group on adenosine at position 37 (t(6)A37) in tRNAs that read codons beginning with adenine. Is involved in the transfer of the threonylcarbamoyl moiety of threonylcarbamoyl-AMP (TC-AMP) to the N6 group of A37, together with TsaE and TsaB. TsaD likely plays a direct catalytic role in this reaction. The polypeptide is tRNA N6-adenosine threonylcarbamoyltransferase (Geobacter sp. (strain M21)).